Reading from the N-terminus, the 102-residue chain is CRISPR-associated endoribonuclease Cas2 (102 aa).

Mg(2+) is bound at residue D8.

It belongs to the CRISPR-associated endoribonuclease Cas2 protein family. Homodimer, forms a heterotetramer with a Cas1 homodimer. The cofactor is Mg(2+).

Its function is as follows. CRISPR (clustered regularly interspaced short palindromic repeat), is an adaptive immune system that provides protection against mobile genetic elements (viruses, transposable elements and conjugative plasmids). CRISPR clusters contain sequences complementary to antecedent mobile elements and target invading nucleic acids. CRISPR clusters are transcribed and processed into CRISPR RNA (crRNA). Functions as a ssRNA-specific endoribonuclease. Involved in the integration of spacer DNA into the CRISPR cassette. This Acidovorax ebreus (strain TPSY) (Diaphorobacter sp. (strain TPSY)) protein is CRISPR-associated endoribonuclease Cas2.